Consider the following 241-residue polypeptide: 15,16-dihydrobiliverdin:ferredoxin oxidoreductase (241 aa).

Belongs to the HY2 family.

It carries out the reaction 15,16-dihydrobiliverdin + oxidized 2[4Fe-4S]-[ferredoxin] = biliverdin IXalpha + reduced 2[4Fe-4S]-[ferredoxin] + 2 H(+). Functionally, catalyzes the two-electron reduction of biliverdin IX-alpha at the C15 methine bridge. The polypeptide is 15,16-dihydrobiliverdin:ferredoxin oxidoreductase (pebA) (Prochlorococcus marinus (strain SARG / CCMP1375 / SS120)).